The chain runs to 127 residues: Glycine cleavage system H protein 1 (127 aa).

A Lipoyl-binding domain is found at 20-101; that stretch reads SVTVGITPYA…LGAGWFFRFI (82 aa). N6-lipoyllysine is present on Lys60.

It belongs to the GcvH family. As to quaternary structure, the glycine cleavage system is composed of four proteins: P, T, L and H. It depends on (R)-lipoate as a cofactor.

In terms of biological role, the glycine cleavage system catalyzes the degradation of glycine. The H protein shuttles the methylamine group of glycine from the P protein to the T protein. The protein is Glycine cleavage system H protein 1 of Pseudomonas syringae pv. tomato (strain ATCC BAA-871 / DC3000).